Consider the following 96-residue polypeptide: Small, acid-soluble spore protein gamma-type (96 aa).

The span at 1–15 (MNTKNFTPQESRTNA) shows a compositional bias: polar residues. A disordered region spans residues 1–96 (MNTKNFTPQE…SEAKKRNNQQ (96 aa)). Positions 16 to 27 (QQVRQQNQQSAQ) are enriched in low complexity. The span at 28–41 (GTSSGFATEFASET) shows a compositional bias: polar residues. 2 consecutive repeats follow at residues 28-52 (GTSS…QNQQ) and 61-87 (GATA…NQQS). Composition is skewed to low complexity over residues 42-57 (NAQQ…AQAN) and 76-86 (NVQQVRQQNQQ).

This sequence belongs to the gamma-type SASP family.

Its function is as follows. SASP are proteins degraded in the first minutes of spore germination and provide amino acids for both new protein synthesis and metabolism. These proteins may be involved in dormant spore's high resistance to UV light. In Laceyella sacchari (Thermoactinomyces thalpophilus), this protein is Small, acid-soluble spore protein gamma-type.